The sequence spans 192 residues: NADH-quinone oxidoreductase subunit B 1 (192 aa).

The [4Fe-4S] cluster site is built by Cys71, Cys72, Cys136, and Cys166.

The protein belongs to the complex I 20 kDa subunit family. In terms of assembly, NDH-1 is composed of 14 different subunits. Subunits NuoB, C, D, E, F, and G constitute the peripheral sector of the complex. The cofactor is [4Fe-4S] cluster.

It is found in the cell inner membrane. The enzyme catalyses a quinone + NADH + 5 H(+)(in) = a quinol + NAD(+) + 4 H(+)(out). NDH-1 shuttles electrons from NADH, via FMN and iron-sulfur (Fe-S) centers, to quinones in the respiratory chain. The immediate electron acceptor for the enzyme in this species is believed to be ubiquinone. Couples the redox reaction to proton translocation (for every two electrons transferred, four hydrogen ions are translocated across the cytoplasmic membrane), and thus conserves the redox energy in a proton gradient. The chain is NADH-quinone oxidoreductase subunit B 1 from Rhizobium meliloti (strain 1021) (Ensifer meliloti).